The following is a 62-amino-acid chain: Large ribosomal subunit protein bL32 (62 aa).

Over residues 1-19 (MPNPKRRHSKARTGNRRAH) the composition is skewed to basic residues. The disordered stretch occupies residues 1 to 23 (MPNPKRRHSKARTGNRRAHDHLS).

Belongs to the bacterial ribosomal protein bL32 family.

In Koribacter versatilis (strain Ellin345), this protein is Large ribosomal subunit protein bL32.